We begin with the raw amino-acid sequence, 207 residues long: Large ribosomal subunit protein uL3 (207 aa).

This sequence belongs to the universal ribosomal protein uL3 family. As to quaternary structure, part of the 50S ribosomal subunit. Forms a cluster with proteins L14 and L19.

Its function is as follows. One of the primary rRNA binding proteins, it binds directly near the 3'-end of the 23S rRNA, where it nucleates assembly of the 50S subunit. In Desulforapulum autotrophicum (strain ATCC 43914 / DSM 3382 / VKM B-1955 / HRM2) (Desulfobacterium autotrophicum), this protein is Large ribosomal subunit protein uL3.